The chain runs to 300 residues: UDP-N-acetylenolpyruvoylglucosamine reductase (300 aa).

Residues 30-194 (RVGGPADFFV…IGATFVLDSD (165 aa)) enclose the FAD-binding PCMH-type domain. Arg174 is a catalytic residue. The active-site Proton donor is Ser223. Glu293 is a catalytic residue.

This sequence belongs to the MurB family. FAD serves as cofactor.

The protein resides in the cytoplasm. The enzyme catalyses UDP-N-acetyl-alpha-D-muramate + NADP(+) = UDP-N-acetyl-3-O-(1-carboxyvinyl)-alpha-D-glucosamine + NADPH + H(+). It participates in cell wall biogenesis; peptidoglycan biosynthesis. Its function is as follows. Cell wall formation. The polypeptide is UDP-N-acetylenolpyruvoylglucosamine reductase (Geobacter sulfurreducens (strain ATCC 51573 / DSM 12127 / PCA)).